The following is a 266-amino-acid chain: MILVIDVGNSHTVTGLYDHGKLIGHWRLKTDRDRTSDELAIRYHGLFIMEGIDPRQITDIVLASVVPTLSSAWIRCCERHFGKHLNQPVMDLSVTKLAPLVRVETDNPHEVGIDRLVNAYGAWHTRKTDLIVIDFGTAITFDCVTSDCVYIGGVILPGIAISLDALATRTAKLPMVDVRDVPSSLIGKNTVHAMQSGILYGYGAMVDGIVEGIQKEMLGGKRRAEVIATGGMANLIEPFTTTIEHIDKLLTLDAMELILHALKKKQ.

6-13 (DVGNSHTV) lines the ATP pocket. A substrate-binding site is contributed by 112–115 (GIDR). The active-site Proton acceptor is the Asp114. Residue Asp134 participates in K(+) binding. Residue Thr137 coordinates ATP. Residue Thr190 participates in substrate binding.

Belongs to the type III pantothenate kinase family. In terms of assembly, homodimer. The cofactor is NH4(+). K(+) is required as a cofactor.

The protein localises to the cytoplasm. The enzyme catalyses (R)-pantothenate + ATP = (R)-4'-phosphopantothenate + ADP + H(+). It participates in cofactor biosynthesis; coenzyme A biosynthesis; CoA from (R)-pantothenate: step 1/5. Its function is as follows. Catalyzes the phosphorylation of pantothenate (Pan), the first step in CoA biosynthesis. In Desulfotalea psychrophila (strain LSv54 / DSM 12343), this protein is Type III pantothenate kinase.